The following is a 315-amino-acid chain: DNA-directed RNA polymerase subunit alpha (315 aa).

Positions 1–228 (MLEIEKPKIE…EHLRLFVGLT (228 aa)) are alpha N-terminal domain (alpha-NTD). The segment at 245-315 (KNKLLEMPIE…LGLDLRHDEE (71 aa)) is alpha C-terminal domain (alpha-CTD).

The protein belongs to the RNA polymerase alpha chain family. As to quaternary structure, homodimer. The RNAP catalytic core consists of 2 alpha, 1 beta, 1 beta' and 1 omega subunit. When a sigma factor is associated with the core the holoenzyme is formed, which can initiate transcription.

The catalysed reaction is RNA(n) + a ribonucleoside 5'-triphosphate = RNA(n+1) + diphosphate. DNA-dependent RNA polymerase catalyzes the transcription of DNA into RNA using the four ribonucleoside triphosphates as substrates. This is DNA-directed RNA polymerase subunit alpha from Desulforudis audaxviator (strain MP104C).